Reading from the N-terminus, the 400-residue chain is 3-hydroxykynurenine transaminase (400 aa).

A binds to and confers specificity for 3-hydroxykynurenine; shared with dimeric partner region spans residues 43-44; sequence SN. Residues 77–79, S154, and Q204 each bind pyridoxal 5'-phosphate; that span reads SAH. S154 contacts substrate. K205 carries the N6-(pyridoxal phosphate)lysine modification. Positions 256 and 259 each coordinate pyridoxal 5'-phosphate. R356 is a substrate binding site.

This sequence belongs to the class-V pyridoxal-phosphate-dependent aminotransferase family. In terms of assembly, homodimer. May form homotetramer. It depends on pyridoxal 5'-phosphate as a cofactor.

The protein localises to the peroxisome. It carries out the reaction glyoxylate + L-alanine = glycine + pyruvate. The enzyme catalyses L-kynurenine + glyoxylate = kynurenate + glycine + H2O. It catalyses the reaction 3-hydroxy-L-kynurenine + glyoxylate = xanthurenate + glycine + H2O. The catalysed reaction is 3-hydroxy-L-kynurenine + pyruvate = xanthurenate + L-alanine + H2O. It carries out the reaction L-kynurenine + pyruvate = kynurenate + L-alanine + H2O. The enzyme catalyses 2-oxobutanoate + L-alanine = (2S)-2-aminobutanoate + pyruvate. It catalyses the reaction L-phenylalanine + pyruvate = 3-phenylpyruvate + L-alanine. The catalysed reaction is L-serine + pyruvate = 3-hydroxypyruvate + L-alanine. It carries out the reaction L-cysteine + pyruvate = 2-oxo-3-sulfanylpropanoate + L-alanine. The enzyme catalyses 3-hydroxy-L-kynurenine + oxaloacetate = 4-(2-amino-3-hydroxyphenyl)-2,4-dioxobutanoate + L-aspartate. It catalyses the reaction 3-hydroxy-L-kynurenine + 3-phenylpyruvate = 4-(2-amino-3-hydroxyphenyl)-2,4-dioxobutanoate + L-phenylalanine. The catalysed reaction is L-kynurenine + oxaloacetate = 4-(2-aminophenyl)-2,4-dioxobutanoate + L-aspartate. It carries out the reaction 3-phenylpyruvate + L-kynurenine = 4-(2-aminophenyl)-2,4-dioxobutanoate + L-phenylalanine. The protein operates within amino-acid degradation; L-kynurenine degradation; kynurenate from L-kynurenine: step 1/2. Functionally, catalyzes the pyridoxal 5'-phosphate-dependent transamination of both 3-hydroxykynurenine and L-kynurenine to xanthurenic acid and kynurenic acid, respectively, preferentially using the alpha-ketoacid pyruvate, glyoxylate or oxaloacetate as the amino group acceptor. The affinity and catalytic efficiency for 3-hydroxykynurenine is higher than for L-kynurenine. Involved in the detoxification of cytotoxic metabolite 3-hydroxykynurenine generated by the hydroxylation of L-kynurenine, an intermediate in the tryptophan catabolism pathway. Also catalyzes, although with a lesser efficiency, the transamination of alanine with glyoxylate as an amino group acceptor. May play a role in the detoxification of glyoxylate, a toxic plant metabolite from the diet. In Aedes aegypti (Yellowfever mosquito), this protein is 3-hydroxykynurenine transaminase.